Reading from the N-terminus, the 499-residue chain is L-arabinose isomerase (499 aa).

Residues E306, E333, H350, and H449 each contribute to the Mn(2+) site.

It belongs to the arabinose isomerase family. Mn(2+) is required as a cofactor.

It carries out the reaction beta-L-arabinopyranose = L-ribulose. It functions in the pathway carbohydrate degradation; L-arabinose degradation via L-ribulose; D-xylulose 5-phosphate from L-arabinose (bacterial route): step 1/3. Its function is as follows. Catalyzes the conversion of L-arabinose to L-ribulose. The protein is L-arabinose isomerase of Tolumonas auensis (strain DSM 9187 / NBRC 110442 / TA 4).